We begin with the raw amino-acid sequence, 1781 residues long: Atrochrysone carboxylic acid synthase (1781 aa).

The tract at residues 15–253 (TRDLFRRLHV…KHVALPVYAG (239 aa)) is N-terminal acylcarrier protein transacylase domain (SAT). Positions 390–823 (QSKIAIVGMA…GGNTSVVVEE (434 aa)) constitute a Ketosynthase family 3 (KS3) domain. Residues C563, H698, and H741 each act as for beta-ketoacyl synthase activity in the active site. A malonyl-CoA:ACP transacylase (MAT) domain region spans residues 925–1244 (FAFTGQGASH…SLGLLHCAGL (320 aa)). A product template (PT) domain region spans residues 1312 to 1631 (TSTVQQIIEE…RVLLNRFFSA (320 aa)). Residues 1316-1451 (QQIIEETFSD…ADIVYGLPTD (136 aa)) form an N-terminal hotdog fold region. Residues 1316–1626 (QQIIEETFSD…FRRYPRVLLN (311 aa)) form the PKS/mFAS DH domain. H1348 functions as the Proton acceptor; for dehydratase activity in the catalytic mechanism. Residues 1478–1626 (IANRLSHNMA…FRRYPRVLLN (149 aa)) form a C-terminal hotdog fold region. D1537 serves as the catalytic Proton donor; for dehydratase activity. A disordered region spans residues 1633–1653 (DSDTSKHTSATDVSPPKKVVQ). Residues 1703–1780 (VDSDSTASKA…DLKAWLMEYY (78 aa)) enclose the Carrier domain. An O-(pantetheine 4'-phosphoryl)serine modification is found at S1740.

The catalysed reaction is holo-[ACP] + 8 malonyl-CoA + 8 H(+) = atrochrysone carboxyl-[ACP] + 8 CO2 + 8 CoA + 2 H2O. The protein operates within secondary metabolite biosynthesis. Atrochrysone carboxylic acid synthase; part of the gene cluster that mediates the biosynthesis of the dimeric xanthones cryptosporioptides. The pathway begins with the synthesis of atrochrysone thioester by the polyketide synthase dmx-nrPKS. The atrochrysone carboxyl ACP thioesterase dmxR1 then breaks the thioester bond and releases the atrochrysone carboxylic acid from dmx-nrPKS. Atrochrysone carboxylic acid is decarboxylated by the decarboxylase dmxR15, and oxidized by the anthrone oxygenase dmxR16 to yield emodin. Emodin is then reduced to emodin hydroquinone by the oxidoreductase dmxR7. A-ring reduction by the short chain dehydrogenase dmxR18, dehydration by the scytalone dehydratase-like protein dmxR17 and probable spontaneous re-oxidation, results in overall deoxygenation to chrysophanol. Baeyer-Villiger oxidation by the Baeyer-Villiger monooxygenase (BVMO) dmxR6 then yields monodictylactone in equilibrium with monodictyphenone. In the case of the cryptosporioptides biosynthesis, monodictylactone is reduced at C-12 to an alcohol (by the short chain dehydrogenases dmxR12 or dmxR8) and hydroxylated at C-5 by dmxR9, yielding the electron-rich aromatic which could eliminate H(2)O to form the ortho-quinonemethide, followed by tautomerisation to paraquinone and complete the formal reduction to produce the 10-methylgroup. Conjugate addition of C-4a-OH to the resulting paraquinone by the monooxygenase dmxR10 then gives cyclohexadienone, which is then reduced at C-5 by the short chain dehydrogenase dmxR3 to give the dihydroxanthone. The 6,7-epoxide in the cryptosporioptides could be introduced by the cytochrome P450 monooxygenase dmxL3. The highly reducing PKS dmxL2 manufactures butyrate, which is further carboxylated by dmxL1 to form ethylmalonate. It is not yet clear whether the carboxylation occurs while the butyrate is attached to the ACP of dmxL2, but this unusual fungal metabolite could then be esterified to O-5 by the O-acetyltransferase dmxR13. Finally, dimerization performed by dmxR5 gives the observed dimers cryptosporioptides A, B and C as the final products of the pathway. This chain is Atrochrysone carboxylic acid synthase, found in Cryptosporiopsis sp. (strain 8999).